The primary structure comprises 989 residues: Voltage-gated delayed rectifier potassium channel KCNH1 (989 aa).

Residues M1 to W220 lie on the Cytoplasmic side of the membrane. Residues Q14–S94 enclose the PAS domain. The PAC domain maps to N93–C145. The interval F151–R162 is required for phosphatidylinositol bisphosphate binding. The chain crosses the membrane as a helical span at residues D221–F241. Topologically, residues K242–V248 are extracellular. Residues A249–F269 form a helical membrane-spanning segment. At H270–N290 the chain is on the cytoplasmic side. Residues Y291–I309 form a helical membrane-spanning segment. Over N310–G345 the chain is Extracellular. The helical; Voltage-sensor transmembrane segment at I346–L368 threads the bilayer. Residues D369–A377 lie on the Cytoplasmic side of the membrane. A helical membrane pass occupies residues V378–S399. The Extracellular portion of the chain corresponds to I400–S448. Residues N415 and N433 are each glycosylated (N-linked (GlcNAc...) asparagine). Positions V449–A470 form an intramembrane region, pore-forming. A Selectivity filter motif is present at residues S463–N468. The Extracellular portion of the chain corresponds to P471–K477. A helical membrane pass occupies residues I478–V498. Over T499–S989 the chain is Cytoplasmic. The tract at residues K673–N770 is calmodulin-binding. An interaction with cyclic nucleotide-binding pocket region spans residues Y699–L701. Basic and acidic residues predominate over residues K855 to S879. 2 disordered regions span residues K855–K886 and R962–S989. Residues A924–S964 form a CAD (involved in subunit assembly) region. A phosphoserine mark is found at S974, S978, and S981. The span at E980 to S989 shows a compositional bias: basic and acidic residues.

It belongs to the potassium channel family. H (Eag) (TC 1.A.1.20) subfamily. Kv10.1/KCNH1 sub-subfamily. As to quaternary structure, homomultimer. The potassium channel is composed of a homo- or heterotetrameric complex of pore-forming alpha subunits that can associate with modulating beta subunits. Heteromultimer with KCNH5/EAG2. Interacts with ALG10B. Interacts with RABEP1. Interacts (via C-terminus) with CTTN. Interacts (via C-terminal cytoplasmic region) with Ca(2+)-bound calmodulin. Interacts with the spider kappa-theraphotoxin-Aa1a and mu/kappa-theraphotoxin-Ap1a. Post-translationally, channel activity is regulated via tyrosine phosphorylation/dephosphorylation by SRC and PTPN6. In terms of tissue distribution, highly expressed in brain and in myoblasts at the onset of fusion, but not in other tissues. Detected in HeLa (cervical carcinoma), SH-SY5Y (neuroblastoma) and MCF-7 (epithelial tumor) cells, but not in normal epithelial cells.

It is found in the cell membrane. The protein localises to the nucleus inner membrane. Its subcellular location is the cell projection. It localises to the dendrite. The protein resides in the axon. It is found in the presynaptic cell membrane. The protein localises to the perikaryon. Its subcellular location is the postsynaptic density membrane. It localises to the early endosome membrane. The enzyme catalyses K(+)(in) = K(+)(out). With respect to regulation, channel activity is inhibited by interaction with Ca(2+)-bound calmodulin. Interaction of a single pore-forming alpha subunit with a calmodulin chain is sufficient to promote channel closure. Channel activity is not regulated by cyclic nucleotides. Channel activity is inhibited by binding intracellular phosphatidylinositol-3,5-bisphosphate and phosphatidylinositol-4,5-bisphosphate (PIP2), but is not inhibited by phosphatidylinositol 4-phosphate. Inhibited by the spider kappa-theraphotoxin-Aa1a and mu/kappa-theraphotoxin-Ap1a. In terms of biological role, pore-forming (alpha) subunit of a voltage-gated delayed rectifier potassium channel that mediates outward-rectifying potassium currents which, on depolarization, reaches a steady-state level and do not inactivate. The activation kinetics depend on the prepulse potential and external divalent cation concentration. With negative prepulses, the current activation is delayed and slowed down several fold, whereas more positive prepulses speed up activation. The time course of activation is biphasic with a fast and a slowly activating current component. Activates at more positive membrane potentials and exhibit a steeper activation curve. Channel properties are modulated by subunit assembly. Mediates IK(NI) current in myoblasts. Involved in the regulation of cell proliferation and differentiation, in particular adipogenic and osteogenic differentiation in bone marrow-derived mesenchymal stem cells (MSCs). This Homo sapiens (Human) protein is Voltage-gated delayed rectifier potassium channel KCNH1.